The chain runs to 470 residues: ATP synthase subunit beta 2 (470 aa).

An ATP-binding site is contributed by 155 to 162; sequence GGAGVGKT.

This sequence belongs to the ATPase alpha/beta chains family. As to quaternary structure, F-type ATPases have 2 components, CF(1) - the catalytic core - and CF(0) - the membrane proton channel. CF(1) has five subunits: alpha(3), beta(3), gamma(1), delta(1), epsilon(1). CF(0) has three main subunits: a(1), b(2) and c(9-12). The alpha and beta chains form an alternating ring which encloses part of the gamma chain. CF(1) is attached to CF(0) by a central stalk formed by the gamma and epsilon chains, while a peripheral stalk is formed by the delta and b chains.

The protein localises to the cell inner membrane. The catalysed reaction is ATP + H2O + 4 H(+)(in) = ADP + phosphate + 5 H(+)(out). In terms of biological role, produces ATP from ADP in the presence of a proton gradient across the membrane. The catalytic sites are hosted primarily by the beta subunits. The sequence is that of ATP synthase subunit beta 2 from Nitrosospira multiformis (strain ATCC 25196 / NCIMB 11849 / C 71).